Consider the following 410-residue polypeptide: Multifunctional CCA protein (410 aa).

2 residues coordinate ATP: G8 and R11. 2 residues coordinate CTP: G8 and R11. Mg(2+) is bound by residues D21 and D23. R91, R138, and R141 together coordinate ATP. CTP-binding residues include R91, R138, and R141. Positions 229–347 (TGIHQEMVSD…AQLALVCEAD (119 aa)) constitute an HD domain.

It belongs to the tRNA nucleotidyltransferase/poly(A) polymerase family. Bacterial CCA-adding enzyme type 1 subfamily. As to quaternary structure, monomer. Can also form homodimers and oligomers. Requires Mg(2+) as cofactor. Ni(2+) is required as a cofactor.

The catalysed reaction is a tRNA precursor + 2 CTP + ATP = a tRNA with a 3' CCA end + 3 diphosphate. The enzyme catalyses a tRNA with a 3' CCA end + 2 CTP + ATP = a tRNA with a 3' CCACCA end + 3 diphosphate. In terms of biological role, catalyzes the addition and repair of the essential 3'-terminal CCA sequence in tRNAs without using a nucleic acid template. Adds these three nucleotides in the order of C, C, and A to the tRNA nucleotide-73, using CTP and ATP as substrates and producing inorganic pyrophosphate. tRNA 3'-terminal CCA addition is required both for tRNA processing and repair. Also involved in tRNA surveillance by mediating tandem CCA addition to generate a CCACCA at the 3' terminus of unstable tRNAs. While stable tRNAs receive only 3'-terminal CCA, unstable tRNAs are marked with CCACCA and rapidly degraded. In Xanthomonas axonopodis pv. citri (strain 306), this protein is Multifunctional CCA protein.